A 135-amino-acid polypeptide reads, in one-letter code: NADH-quinone oxidoreductase subunit K (135 aa).

3 helical membrane-spanning segments follow: residues 33–53 (VLGLIPMSHGLILAGILFAIG), 63–83 (FLFMLMSLEIMMNAAALAFVV), and 95–115 (IMFIFILTLAAAEAAIGLAIL).

This sequence belongs to the complex I subunit 4L family. NDH-1 is composed of 14 different subunits. Subunits NuoA, H, J, K, L, M, N constitute the membrane sector of the complex.

The protein resides in the cell inner membrane. It carries out the reaction a quinone + NADH + 5 H(+)(in) = a quinol + NAD(+) + 4 H(+)(out). NDH-1 shuttles electrons from NADH, via FMN and iron-sulfur (Fe-S) centers, to quinones in the respiratory chain. The immediate electron acceptor for the enzyme in this species is believed to be ubiquinone. Couples the redox reaction to proton translocation (for every two electrons transferred, four hydrogen ions are translocated across the cytoplasmic membrane), and thus conserves the redox energy in a proton gradient. The sequence is that of NADH-quinone oxidoreductase subunit K from Psychrobacter cryohalolentis (strain ATCC BAA-1226 / DSM 17306 / VKM B-2378 / K5).